The following is a 405-amino-acid chain: Glucose-1-phosphate adenylyltransferase (405 aa).

Alpha-D-glucose 1-phosphate-binding positions include G164, 179–180 (EK), and S197.

This sequence belongs to the bacterial/plant glucose-1-phosphate adenylyltransferase family. Homotetramer.

The enzyme catalyses alpha-D-glucose 1-phosphate + ATP + H(+) = ADP-alpha-D-glucose + diphosphate. It participates in glycan biosynthesis; glycogen biosynthesis. Involved in the biosynthesis of ADP-glucose, a building block required for the elongation reactions to produce glycogen. Catalyzes the reaction between ATP and alpha-D-glucose 1-phosphate (G1P) to produce pyrophosphate and ADP-Glc. In Corynebacterium jeikeium (strain K411), this protein is Glucose-1-phosphate adenylyltransferase.